Consider the following 641-residue polypeptide: Phosphomethylpyrimidine synthase (641 aa).

Substrate is bound by residues N221, M250, Y279, H315, 335–337 (SRG), 376–379 (DGLR), and E415. H419 is a binding site for Zn(2+). Y442 lines the substrate pocket. H483 lines the Zn(2+) pocket. Residues C563, C566, and C571 each coordinate [4Fe-4S] cluster.

It belongs to the ThiC family. Homodimer. [4Fe-4S] cluster is required as a cofactor.

The catalysed reaction is 5-amino-1-(5-phospho-beta-D-ribosyl)imidazole + S-adenosyl-L-methionine = 4-amino-2-methyl-5-(phosphooxymethyl)pyrimidine + CO + 5'-deoxyadenosine + formate + L-methionine + 3 H(+). The protein operates within cofactor biosynthesis; thiamine diphosphate biosynthesis. In terms of biological role, catalyzes the synthesis of the hydroxymethylpyrimidine phosphate (HMP-P) moiety of thiamine from aminoimidazole ribotide (AIR) in a radical S-adenosyl-L-methionine (SAM)-dependent reaction. The sequence is that of Phosphomethylpyrimidine synthase from Rhodopseudomonas palustris (strain TIE-1).